A 535-amino-acid chain; its full sequence is MGRFHKFPLLGLVLFLGLTGSLIAANEYACSSTDIHFTRANFPKGFIFGTATAAFQVEGAVNEGCRGPSMWDVYTKKFPHKCNYHNADVAVDFYHRYKEDIKLMKNLNTDGFRFSIAWPRIFPHGRMEKGISKAGVQYYHDLIDELLANGITPLVTVFHWDTPQDLEDEYGGFLSDRIIKDFTEYANFTFQEYGDKVKHWITFNEPWVFSRAGYDIGNKAPGRCSKYIKEHGEMCHDGRSGHEAYIVSHNMLLAHADAVDAFRKCDKCKGGKIGIAHSPAWFEAHELSDEEHETPVTGLIDFILGWHLHPTTYGDYPQSMKDHIGHRLPKFTEAQKEKLKNSADFVGINYYTSVFALHDEEPDPSQPSWQSDSLVDWEPRYVDKFNAFANKPDVAKVEVYAKGLRSLLKYIKDKYGNPEIMITENGYGEDLGEQDTSLVVALSDQHRTYYIQKHLLSLHEAICDDKVNVTGYFHWSLMDNFEWQDGYKARFGLYYVDYKNNLTRHEKLSAQWYSSFLHDGSKEFEIEHEFEHDEL.

The first 24 residues, 1 to 24 (MGRFHKFPLLGLVLFLGLTGSLIA), serve as a signal peptide directing secretion. A beta-D-glucoside contacts are provided by Q56 and H159. N-linked (GlcNAc...) asparagine glycosylation is present at N187. A beta-D-glucoside is bound at residue 204–205 (NE). Catalysis depends on E205, which acts as the Proton donor. C224 and C235 are oxidised to a cystine. A beta-D-glucoside contacts are provided by Y351 and E424. The active-site Nucleophile is E424. N-linked (GlcNAc...) asparagine glycosylation is present at N468. A beta-D-glucoside-binding positions include W475, 482–483 (EW), and F491. The N-linked (GlcNAc...) asparagine glycan is linked to N501. Positions 532-535 (HDEL) match the Prevents secretion from ER motif.

This sequence belongs to the glycosyl hydrolase 1 family.

Its subcellular location is the endoplasmic reticulum lumen. It catalyses the reaction Hydrolysis of terminal, non-reducing beta-D-glucosyl residues with release of beta-D-glucose.. The sequence is that of Beta-glucosidase 20 from Arabidopsis thaliana (Mouse-ear cress).